Reading from the N-terminus, the 307-residue chain is Alpha/beta-gliadin MM1 (307 aa).

The first 20 residues, 1 to 20 (MKTFLILALLAIVATTARIA), serve as a signal peptide directing secretion. A compositionally biased stretch (low complexity) spans 29-55 (QPQNPSQQQPQEQVPLVQQQQFPGQQQ). Disordered regions lie at residues 29-134 (QPQN…QQQQ) and 242-267 (QQQY…SVQP). Pro residues-rich tracts occupy residues 56-71 (PFPP…PFPS) and 81-113 (FPQP…PQQP). The tract at residues 76–108 (LQLQPFPQPQLPYPQPQLPYPQPQLPYPQPQPF) is sufficient to initiate the primary inflammatory response to gluten in Celiac Sprue patients. Low complexity-rich tracts occupy residues 114 to 134 (YPQS…QQQQ) and 242 to 260 (QQQY…QNPQ).

Belongs to the gliadin/glutenin family. In terms of processing, substrate of transglutaminase. As to expression, expressed in endosperm.

Its function is as follows. Gliadin is the major seed storage protein in wheat. The chain is Alpha/beta-gliadin MM1 from Triticum aestivum (Wheat).